The chain runs to 649 residues: Endoplasmic reticulum chaperone BiP (649 aa).

A signal peptide spans 1-20; the sequence is MGLSTYVGTFLLCILTLSHC. ATP contacts are provided by residues 36 to 39, Lys96, 226 to 228, 292 to 299, and 363 to 366; these read GTTY, GGT, EKAKRTLS, and GSTR. Positions 125–279 are nucleotide-binding (NBD); that stretch reads KPYMKVQVGS…KKKEGKDITK (155 aa). The tract at residues 399–499 is substrate-binding (SBD); the sequence is VQAGVISGVE…PRGLPQIEVT (101 aa). The Prevents secretion from ER signature appears at 646 to 649; sequence KEEL.

This sequence belongs to the heat shock protein 70 family.

It is found in the endoplasmic reticulum lumen. The enzyme catalyses ATP + H2O = ADP + phosphate + H(+). The chaperone activity is regulated by ATP-induced allosteric coupling of the nucleotide-binding (NBD) and substrate-binding (SBD) domains. In the ADP-bound and nucleotide-free (apo) states, the two domains have little interaction. In contrast, in the ATP-bound state the two domains are tightly coupled, which results in drastically accelerated kinetics in both binding and release of polypeptide substrates. J domain-containing co-chaperones stimulate the ATPase activity and are required for efficient substrate recognition. Its function is as follows. Endoplasmic reticulum chaperone that plays a key role in protein folding and quality control in the endoplasmic reticulum lumen. Involved in the correct folding of proteins and degradation of misfolded proteins. Acts as a key repressor of the unfolded protein response (UPR). The chain is Endoplasmic reticulum chaperone BiP from Echinococcus multilocularis (Fox tapeworm).